The chain runs to 239 residues: RNA polymerase sigma factor FliA (239 aa).

The interval 16–88 (LWQRYVPLVR…MLDELRSRDW (73 aa)) is sigma-70 factor domain-2. An Interaction with polymerase core subunit RpoC motif is present at residues 43–46 (DLLQ). Positions 96-166 (NAREVAQAMG…IELVTEEHQQ (71 aa)) are sigma-70 factor domain-3. The tract at residues 185–233 (AIESLPEREQLVLTLYYQEELNLKEIGAVLEVGESRVSQLHSQAIKRLR) is sigma-70 factor domain-4. Residues 207–226 (LKEIGAVLEVGESRVSQLHS) constitute a DNA-binding region (H-T-H motif).

It belongs to the sigma-70 factor family. FliA subfamily.

It localises to the cytoplasm. Its function is as follows. Sigma factors are initiation factors that promote the attachment of RNA polymerase to specific initiation sites and are then released. This sigma factor controls the expression of flagella-related genes. The sequence is that of RNA polymerase sigma factor FliA from Salmonella typhi.